The sequence spans 339 residues: D-erythrose-4-phosphate dehydrogenase (339 aa).

12–13 (RI) contributes to the NAD(+) binding site. Residues 154–156 (SCT), Arg-200, 213–214 (TK), and Arg-236 each bind substrate. Catalysis depends on Cys-155, which acts as the Nucleophile. Asn-318 provides a ligand contact to NAD(+).

Belongs to the glyceraldehyde-3-phosphate dehydrogenase family. Epd subfamily. Homotetramer.

The protein resides in the cytoplasm. The enzyme catalyses D-erythrose 4-phosphate + NAD(+) + H2O = 4-phospho-D-erythronate + NADH + 2 H(+). The protein operates within cofactor biosynthesis; pyridoxine 5'-phosphate biosynthesis; pyridoxine 5'-phosphate from D-erythrose 4-phosphate: step 1/5. Functionally, catalyzes the NAD-dependent conversion of D-erythrose 4-phosphate to 4-phosphoerythronate. In Photorhabdus laumondii subsp. laumondii (strain DSM 15139 / CIP 105565 / TT01) (Photorhabdus luminescens subsp. laumondii), this protein is D-erythrose-4-phosphate dehydrogenase.